Here is a 172-residue protein sequence, read N- to C-terminus: Ribosome maturation factor RimM (172 aa).

Residues 94-167 (EGSYYYKDII…VAHVIVPEGL (74 aa)) enclose the PRC barrel domain.

Belongs to the RimM family. In terms of assembly, binds ribosomal protein uS19.

The protein resides in the cytoplasm. In terms of biological role, an accessory protein needed during the final step in the assembly of 30S ribosomal subunit, possibly for assembly of the head region. Essential for efficient processing of 16S rRNA. May be needed both before and after RbfA during the maturation of 16S rRNA. It has affinity for free ribosomal 30S subunits but not for 70S ribosomes. The protein is Ribosome maturation factor RimM of Lacticaseibacillus paracasei (strain ATCC 334 / BCRC 17002 / CCUG 31169 / CIP 107868 / KCTC 3260 / NRRL B-441) (Lactobacillus paracasei).